Here is a 399-residue protein sequence, read N- to C-terminus: Acetate kinase (399 aa).

Residue Asn-9 coordinates Mg(2+). Lys-16 is an ATP binding site. Substrate is bound at residue Arg-90. The Proton donor/acceptor role is filled by Asp-147. ATP contacts are provided by residues 207–211, 281–283, and 333–337; these read HLGNG, DFR, and GVGEN. Residue Glu-387 participates in Mg(2+) binding.

It belongs to the acetokinase family. Homodimer. Mg(2+) serves as cofactor. The cofactor is Mn(2+).

The protein resides in the cytoplasm. It carries out the reaction acetate + ATP = acetyl phosphate + ADP. The protein operates within metabolic intermediate biosynthesis; acetyl-CoA biosynthesis; acetyl-CoA from acetate: step 1/2. Functionally, catalyzes the formation of acetyl phosphate from acetate and ATP. Can also catalyze the reverse reaction. The polypeptide is Acetate kinase (Mycobacterium sp. (strain KMS)).